The sequence spans 182 residues: MPGRSRRRRELDRTEKREFVASLAAVFAETSMVVVTRNDGLTVADATILRQRVRAAGATYKVAKNRLANLALAGTRFEGISPLLKGPTALSWSADPVAVAKVLVEFAKTNEKLVLLGGALGTQTLNVDGVKALAELPSLDTLRAQLVGLISTPATRIAGVLQAPAGQLARVFGAYAKKDEAA.

The protein belongs to the universal ribosomal protein uL10 family. As to quaternary structure, part of the ribosomal stalk of the 50S ribosomal subunit. The N-terminus interacts with L11 and the large rRNA to form the base of the stalk. The C-terminus forms an elongated spine to which L12 dimers bind in a sequential fashion forming a multimeric L10(L12)X complex.

Forms part of the ribosomal stalk, playing a central role in the interaction of the ribosome with GTP-bound translation factors. The chain is Large ribosomal subunit protein uL10 from Gluconacetobacter diazotrophicus (strain ATCC 49037 / DSM 5601 / CCUG 37298 / CIP 103539 / LMG 7603 / PAl5).